Consider the following 335-residue polypeptide: Deoxyhypusine hydroxylase (335 aa).

5 HEAT-like PBS-type repeats span residues 71–97, 104–130, 200–233, 238–264, and 271–298; these read LKHELAYCLGQTRNPESVPYLQEVVKD, CRHEAAEALGALGYEDSLEILKVLRDN, QRYRAMFALRDLASPPDLPTATHAVEALAKGLKD, FRHEIAFVFGQLSHPASIPSLTEALSD, and VRHEAAEALGSLGDCEGVEDTLKKFLND. Histidine 73, glutamate 74, histidine 106, and glutamate 107 together coordinate Fe cation. Fe cation is bound by residues histidine 240, glutamate 241, histidine 273, and glutamate 274.

Belongs to the deoxyhypusine hydroxylase family. It depends on Fe(2+) as a cofactor.

The protein localises to the cytoplasm. The protein resides in the nucleus. The catalysed reaction is [eIF5A protein]-deoxyhypusine + AH2 + O2 = [eIF5A protein]-hypusine + A + H2O. The protein operates within protein modification; eIF5A hypusination. In terms of biological role, catalyzes the hydroxylation of the N(6)-(4-aminobutyl)-L-lysine intermediate to form hypusine, an essential post-translational modification only found in mature eIF-5A factor. The protein is Deoxyhypusine hydroxylase (lia1) of Aspergillus clavatus (strain ATCC 1007 / CBS 513.65 / DSM 816 / NCTC 3887 / NRRL 1 / QM 1276 / 107).